We begin with the raw amino-acid sequence, 449 residues long: Trigger factor (449 aa).

The PPIase FKBP-type domain maps to 173 to 258; it reads GDRVTVDFVG…MKKVEWPHLP (86 aa).

It belongs to the FKBP-type PPIase family. Tig subfamily.

It is found in the cytoplasm. It carries out the reaction [protein]-peptidylproline (omega=180) = [protein]-peptidylproline (omega=0). Involved in protein export. Acts as a chaperone by maintaining the newly synthesized protein in an open conformation. Functions as a peptidyl-prolyl cis-trans isomerase. The sequence is that of Trigger factor from Burkholderia thailandensis (strain ATCC 700388 / DSM 13276 / CCUG 48851 / CIP 106301 / E264).